Here is a 244-residue protein sequence, read N- to C-terminus: GTP cyclohydrolase 1 type 2 homolog (244 aa).

Residues H65, H66, D102, H216, and E220 each contribute to the a divalent metal cation site.

This sequence belongs to the GTP cyclohydrolase I type 2/NIF3 family. As to quaternary structure, homohexamer; trimer of dimers, that forms a hollow cage-like architecture.

DNA-binding protein exhibiting the ability to bind to both single-stranded and double-stranded DNA. The chain is GTP cyclohydrolase 1 type 2 homolog from Methanocaldococcus jannaschii (strain ATCC 43067 / DSM 2661 / JAL-1 / JCM 10045 / NBRC 100440) (Methanococcus jannaschii).